The following is a 512-amino-acid chain: Secreted triacylglycerol lipase LIP5 (512 aa).

A signal peptide spans 1–17; sequence MMYASLVHWLALAVALA. An intrachain disulfide couples Cys118 to Cys292. The active-site Nucleophile is Ser203. The N-linked (GlcNAc...) asparagine glycan is linked to Asn316. The active site involves Asp352. Asn361 carries an N-linked (GlcNAc...) asparagine glycan. Residue His386 is part of the active site. N-linked (GlcNAc...) asparagine glycosylation is present at Asn453. Residues 480-512 are disordered; the sequence is KGDISPGEGGDHTKESKKAAAKFKAEKKHGKHH. Positions 488–497 are enriched in basic and acidic residues; sequence GGDHTKESKK. Basic residues predominate over residues 498 to 512; the sequence is AAAKFKAEKKHGKHH.

Belongs to the AB hydrolase superfamily. Lipase family. Class Lip subfamily.

The protein resides in the secreted. It carries out the reaction a triacylglycerol + H2O = a diacylglycerol + a fatty acid + H(+). The enzyme catalyses a monoacylglycerol + H2O = glycerol + a fatty acid + H(+). It catalyses the reaction a diacylglycerol + H2O = a monoacylglycerol + a fatty acid + H(+). Its function is as follows. Secreted lipase that hydrolyzes acylglycerol lipids such as triacylglycerols and consequently releases free fatty acid. Can hydrolyze 4-nitrophenyl palmitate to release 4-nitrophenol and palmitoic acid. Due to an absence of fatty acid synthase genes in Malassezia species, secretory lipases are essential for the yeast to generate free fatty acids from degradation of sebum and assimilate them as lipid sources for growth. Plays an essential role at the pathogen-host interface during disease progression. The polypeptide is Secreted triacylglycerol lipase LIP5 (Malassezia restricta (strain ATCC 96810 / NBRC 103918 / CBS 7877) (Seborrheic dermatitis infection agent)).